The chain runs to 80 residues: UPF0181 protein SG1330 (80 aa).

Residues 58 to 80 (TEVLETPAARAETDPYDSNPDDD) form a disordered region.

Belongs to the UPF0181 family.

In Sodalis glossinidius (strain morsitans), this protein is UPF0181 protein SG1330.